The sequence spans 145 residues: Transcriptional regulator ZitR (145 aa).

An HTH marR-type domain is found at 1-142 (MSLANQIDQF…ISQFLSVLTE (142 aa)). The Zn(2+) site is built by Glu-23, Cys-29, Glu-40, and His-41. A DNA-binding region (H-T-H motif) is located at residues 53–76 (NARIAEQLKISPAAVTKALKKLQE). Zn(2+)-binding residues include Glu-106, His-107, and His-111.

In terms of assembly, homodimer.

With respect to regulation, zinc acts as a corepressor and is required for DNA-binding activity. Binds up to two zinc ligands per monomer. Inactive under zinc deprivation. Its function is as follows. Zinc-responsive regulator that represses expression of the zit operon in the presence of zinc. Acts by binding two palindromic operator sites overlapping the -35 and -10 boxes of the zit promoter. Could be a sensitive sensor of intracellular zinc to efficiently respond to zinc variations in the environment. This is Transcriptional regulator ZitR (zitR) from Lactococcus lactis subsp. cremoris (strain MG1363).